We begin with the raw amino-acid sequence, 647 residues long: Chaperone protein DnaK (647 aa).

Phosphothreonine; by autocatalysis is present on threonine 198. Basic and acidic residues-rich tracts occupy residues 514–529 (AEAN…ESVD), 540–557 (STEK…DADK), and 600–622 (SQEK…KDDN). Disordered stretches follow at residues 514 to 557 (AEAN…DADK) and 596 to 647 (AIYK…EKSA). Residues 623 to 632 (VVDADFEEVK) show a composition bias toward acidic residues. Residues 633–647 (EESKEGKEEDKEKSA) show a composition bias toward basic and acidic residues.

This sequence belongs to the heat shock protein 70 family.

Acts as a chaperone. This Pelagibacter ubique (strain HTCC1062) protein is Chaperone protein DnaK.